The following is a 628-amino-acid chain: Zinc finger protein 555 (628 aa).

Positions 4-77 (VVFEDVAVDF…ESKIATFTRN (74 aa)) constitute a KRAB domain. The C2H2-type 1; degenerate zinc finger occupies 172-194 (YQCQECGQAYSCRSHLRMHVRTH). C2H2-type zinc fingers lie at residues 200–222 (YVCK…VRIH), 228–250 (YECK…LRSH), 256–278 (YKCK…TITH), 284–306 (YKCK…MISH), 312–334 (HKCK…MITH), 340–362 (YECK…ERIH), 368–390 (YECK…ERTH), 396–418 (YECN…MRVH), 424–446 (YECK…MRTH), 452–474 (YECK…VRMH), 480–502 (YECK…MRRH), 508–530 (YKCK…VRTH), 536–558 (YECK…MRLH), and 564–586 (YQCK…VRIH).

Belongs to the krueppel C2H2-type zinc-finger protein family.

It localises to the nucleus. Functionally, may be involved in transcriptional regulation. The protein is Zinc finger protein 555 (ZNF555) of Homo sapiens (Human).